The sequence spans 225 residues: Plasma membrane-associated cation-binding protein 1 (225 aa).

Residue glycine 2 is the site of N-myristoyl glycine attachment. The residue at position 32 (threonine 32) is a Phosphothreonine. At serine 107 the chain carries Phosphoserine. Basic and acidic residues predominate over residues proline 140–alanine 197. Positions proline 140–proline 225 are disordered. 2 positions are modified to phosphothreonine: threonine 152 and threonine 177.

This sequence belongs to the DREPP family. Interacts with Turnip mosaic virus (TuMV) P3N-PIPO. It depends on Cu(2+) as a cofactor. As to expression, mostly expressed in the basal region of hypocotyls. Expressed in seedlings, roots, shoots, stems, leaves (e.g. in epidermis and vascular tissues), flowers (e.g. in pistils and anthers) and siliques (at protein level).

It is found in the cell membrane. The protein resides in the cytoplasm. The protein localises to the cytoskeleton. It localises to the cell junction. Its subcellular location is the plasmodesma. In terms of biological role, may be involved in intracellular signaling through interaction with PtdInsPs and calmodulin (CaM); may keep PtdInsPs attached to the plasma membrane until Ca(2+)-CaM reaches a competitive concentration subsequent to an increase triggered by a stimulus, thus leading to PtdInsPs release and subsequent activation of InsPs-dependent signaling cascade. Interacts competitively at the N-terminus with calcium ions and CaM (in a calcium-dependent manner), and with the phosphatidylinositol phosphates PtdIns(3,4,5)P(3), PtdIns(3,4)P(2), PtdIns(4,5)P(2) and PtdIns(3,5)P(2). Also binds weakly to PtdIns(3)P, PtdIns(4)P and PtdIns(5)P. Negative regulator of hypocotyl cell elongation by destabilizing cortical microtubules in a calcium-dependent manner. Binds directly to and destabilized microtubules to enhance microtubule depolymerization when cytoplasmic calcium increases. In case of Turnip mosaic virus (TuMV) infection, confers sensitivity by promoting viral cell-to-cell movement through interaction with viral P3N-PIPO. In Arabidopsis thaliana (Mouse-ear cress), this protein is Plasma membrane-associated cation-binding protein 1 (PCAP1).